Reading from the N-terminus, the 88-residue chain is Small ribosomal subunit protein eS21 (88 aa).

It belongs to the eukaryotic ribosomal protein eS21 family. Component of the small ribosomal subunit. Mature ribosomes consist of a small (40S) and a large (60S) subunit. The 40S subunit contains about 33 different proteins and 1 molecule of RNA (18S). The 60S subunit contains about 49 different proteins and 3 molecules of RNA (25S, 5.8S and 5S).

It is found in the cytoplasm. Required for the processing of the 20S rRNA-precursor to mature 18S rRNA in a late step of the maturation of 40S ribosomal subunits. Has a physiological role leading to 18S rRNA stability. This Aspergillus fumigatus (strain ATCC MYA-4609 / CBS 101355 / FGSC A1100 / Af293) (Neosartorya fumigata) protein is Small ribosomal subunit protein eS21 (rps21).